Consider the following 753-residue polypeptide: Putative cyclic nucleotide-gated ion channel 8 (753 aa).

Residues 1–111 (MYKSQYISGH…DKTLLLWNRM (111 aa)) are Cytoplasmic-facing. The chain crosses the membrane as a helical span at residues 112-132 (FVISCILAVSVDPLFFYLPIV). The Extracellular portion of the chain corresponds to 133 to 145 (DNSKNCIGIDSKL). The helical transmembrane segment at 146–166 (AVTTTTLRTIIDVFYLTRMAL) threads the bilayer. The Cytoplasmic segment spans residues 167–199 (QFRTAYIAPSSRVFGRGELVIDPAKIAERYLTR). The chain crosses the membrane as a helical span at residues 200 to 220 (YFIVDFLAVLPLPQIAVWKFL). At 221 to 233 (HGSKGTDVLPTKQ) the chain is on the extracellular side. A helical transmembrane segment spans residues 234–254 (ALLHIVITQYIPRFVRFIPLT). The Cytoplasmic segment spans residues 255-274 (SELKKTAGAFAEGAWAGAAY). Residues 275 to 295 (YLLWYMLASHITGAFWYMLSV) form a helical membrane-spanning segment. The Extracellular portion of the chain corresponds to 296 to 402 (ERNDTCLRSA…QGLQTSTYPG (107 aa)). Residues 403–423 (EVLFSIAIAVAGLLLFALLIG) traverse the membrane as a helical segment. Topologically, residues 424 to 753 (NMQTYLQSLT…FEALDTDDLN (330 aa)) are cytoplasmic. A nucleoside 3',5'-cyclic phosphate-binding positions include 508 to 638 (LFAN…TFRF) and glutamate 579. Residues 624–639 (FRRLHSRQVQQTFRFY) are calmodulin-binding. Residues 644–673 (RTWAACFIQAAWRRHLRRKIAELRRKEEEE) form the IQ domain. Residues 731-753 (KSLMNLTKPSEPDFEALDTDDLN) form a disordered region. A compositionally biased stretch (acidic residues) spans 742–753 (PDFEALDTDDLN).

This sequence belongs to the cyclic nucleotide-gated cation channel (TC 1.A.1.5) family. Homotetramer or heterotetramer.

Its subcellular location is the cell membrane. In terms of biological role, putative cyclic nucleotide-gated ion channel. In Arabidopsis thaliana (Mouse-ear cress), this protein is Putative cyclic nucleotide-gated ion channel 8 (CNGC8).